Consider the following 261-residue polypeptide: Antiviral protein S (261 aa).

2 disulfide bridges follow: cysteine 34-cysteine 258 and cysteine 84-cysteine 105. Glutamate 175 is an active-site residue.

This sequence belongs to the ribosome-inactivating protein family. Type 1 RIP subfamily.

The catalysed reaction is Endohydrolysis of the N-glycosidic bond at one specific adenosine on the 28S rRNA.. Its function is as follows. Inhibits viral infection of plants, and protein synthesis in vitro. This Phytolacca americana (American pokeweed) protein is Antiviral protein S.